The following is a 240-amino-acid chain: Mitochondrial transcription rescue factor 1 (240 aa).

Residues 1 to 83 (MAVPGVRLLT…ECYFPFSIRL (83 aa)) constitute a mitochondrion transit peptide. Residues 92–127 (STKKTLQKEADEEDSDEETSYPERSEQEEELESEPG) form a disordered region. Residues 101-124 (ADEEDSDEETSYPERSEQEEELES) are compositionally biased toward acidic residues. Residues Ser-106 and Ser-116 each carry the phosphoserine modification. An S4 RNA-binding domain is found at 142 to 217 (FRYDVILKTG…LKKVYEEKTE (76 aa)).

As to quaternary structure, monomer. Interacts with POLRMT. Interacts (via S4 domain) with MTRFR (via C-terminus). Associates with mitoribosomal S39 large subunit, peptidyl tRNA and nascent chain.

It is found in the mitochondrion matrix. Its function is as follows. Mitochondrial RNA-binding protein involved in mitochondrial transcription regulation. Functions as a protective factor to maintain proper mitochondrial RNA level during stress. Acts at the transcription level and its protective function depends on its RNA binding ability. Part of a mitoribosome-associated quality control pathway that prevents aberrant translation by responding to interruptions during elongation. As heterodimer with MTRF, ejects the unfinished nascent chain and peptidyl transfer RNA (tRNA), respectively, from stalled ribosomes. Recruitment of mitoribosome biogenesis factors to these quality control intermediates suggests additional roles for MTRES1 and MTRF during mitoribosome rescue. This Mus musculus (Mouse) protein is Mitochondrial transcription rescue factor 1 (Mtres1).